We begin with the raw amino-acid sequence, 608 residues long: Isoprene synthase, chloroplastic (608 aa).

Residues 1–45 (MATNLLCLSNKLSSPTPTPSTRFPQSKNFITQKTSLANPKPWRVI) constitute a chloroplast transit peptide. Residue D350 coordinates dimethylallyl diphosphate. Positions 350 and 354 each coordinate Mg(2+). A DDXXD motif motif is present at residues 350 to 354 (DDVYD). Dimethylallyl diphosphate contacts are provided by E428, R494, and N497. Mg(2+)-binding residues include N497, T501, and E505.

It belongs to the terpene synthase family. Tpsb subfamily. Requires Mg(2+) as cofactor. It depends on Mn(2+) as a cofactor.

Its subcellular location is the plastid. The protein resides in the chloroplast. It carries out the reaction dimethylallyl diphosphate = isoprene + diphosphate. In terms of biological role, lyase that catalyzes the formation of isoprene from dimethylallyl diphosphate. This Pueraria montana var. lobata (Kudzu vine) protein is Isoprene synthase, chloroplastic (ISPS).